The chain runs to 378 residues: Cysteine synthase (378 aa).

The interval 10–31 (NSEGDSNQQQNNNNNSNNNLKE) is disordered. Residues 15 to 28 (SNQQQNNNNNSNNN) show a composition bias toward low complexity. The residue at position 79 (Lys-79) is an N6-(pyridoxal phosphate)lysine. Pyridoxal 5'-phosphate-binding positions include 215–219 (GTGGT) and Ser-319.

The protein belongs to the cysteine synthase/cystathionine beta-synthase family. Pyridoxal 5'-phosphate is required as a cofactor.

It catalyses the reaction O-acetyl-L-serine + hydrogen sulfide = L-cysteine + acetate. It participates in amino-acid biosynthesis; L-cysteine biosynthesis; L-cysteine from L-serine: step 2/2. This Dictyostelium discoideum (Social amoeba) protein is Cysteine synthase (cysK).